A 589-amino-acid chain; its full sequence is Netrin-G2 (589 aa).

Residues 1 to 17 (MLRLLALFLHCLPLVSG) form the signal peptide. Intrachain disulfides connect Cys22-Cys39, Cys61-Cys81, and Cys69-Cys77. Positions 35 to 286 (EFYACQPKVM…AISNIEVIGR (252 aa)) constitute a Laminin N-terminal domain. Positions 69–88 (CSHENPYLCSNECDASNPDL) are NGL discriminant loop I. Asn122 and Asn128 each carry an N-linked (GlcNAc...) asparagine glycan. Cys171 and Cys195 are disulfide-bonded. Residues 201 to 203 (RWA) form an NGL discriminant loop II region. The segment at 264 to 267 (TYVQ) is NGL discriminant loop III. 15 disulfides stabilise this stretch: Cys287/Cys296, Cys289/Cys305, Cys307/Cys316, Cys319/Cys344, Cys413/Cys422, Cys415/Cys433, Cys436/Cys445, Cys448/Cys466, Cys469/Cys481, Cys471/Cys487, Cys489/Cys498, Cys501/Cys511, Cys516/Cys529, Cys523/Cys535, and Cys537/Cys546. 3 consecutive Laminin EGF-like domains span residues 287-346 (CKCN…ACAA), 413-468 (CECY…VCIE), and 469-513 (CNCN…GCYP). A glycan (N-linked (GlcNAc...) asparagine) is linked at Asn310. N-linked (GlcNAc...) asparagine glycosylation is present at Asn455. Asn482 carries an N-linked (GlcNAc...) asparagine glycan. Residue Gly566 is the site of GPI-anchor amidated glycine attachment. A propeptide spans 567–589 (IVPRPDTLLGCLLLLGLAARLAC) (removed in mature form).

As to quaternary structure, interacts with LRRC4. N-glycosylated. As to expression, expression is restricted primarily to neurons of the CNS, particularly in the cerebral cortex, habenular nucleus and superior colliculus. Low levels in lung, kidney, heart and spleen.

Its subcellular location is the cell membrane. In terms of biological role, involved in controlling patterning and neuronal circuit formation at the laminar, cellular, subcellular and synaptic levels. Promotes neurite outgrowth of both axons and dendrites. This is Netrin-G2 (Ntng2) from Mus musculus (Mouse).